The sequence spans 254 residues: Ferritin-1, chloroplastic (254 aa).

A chloroplast-targeting transit peptide spans 1–47 (MASKALSSFTAKPAVSLLPHGVSSSASPSVMSLSFSRHTGGRGVVAA). Residues 48 to 86 (SSTVDTNNMPMTGVVFQPFEEVKKADLAIPITSNASLAR) are extension peptide (EP). Residues 87-240 (QRYADSSEAA…DFITQLRMVG (154 aa)) form the Ferritin-like diiron domain. Fe cation is bound by residues E104, E139, H142, E188, and Q222.

Belongs to the ferritin family. Oligomer of 24 subunits. There are two types of subunits: L (light) chain and H (heavy) chain. The major chain can be light or heavy, depending on the species and tissue type. The functional molecule forms a roughly spherical shell with a diameter of 12 nm and contains a central cavity into which the insoluble mineral iron core is deposited.

The protein localises to the plastid. Its subcellular location is the chloroplast. It catalyses the reaction 4 Fe(2+) + O2 + 4 H(+) = 4 Fe(3+) + 2 H2O. Functionally, stores iron in a soluble, non-toxic, readily available form. Important for iron homeostasis. Has ferroxidase activity. Iron is taken up in the ferrous form and deposited as ferric hydroxides after oxidation. The sequence is that of Ferritin-1, chloroplastic (LSC30) from Brassica napus (Rape).